The following is a 143-amino-acid chain: MLMGQYEHTIDAKGRVIIPAKFREELGEKFVLTKGLDNCLFVYSLEEWKNIEAKLKTLPLTKKDARAFTRFFLAGAVECEIDKQGRILIPANLREHAKIEKDVIFIGVSTRVEIWSKEVWEEYSNNTDVSFEEIAEHLDDLNI.

SpoVT-AbrB domains lie at 5 to 47 and 76 to 119; these read QYEH…SLEE and AVEC…SKEV.

It belongs to the MraZ family. As to quaternary structure, forms oligomers.

Its subcellular location is the cytoplasm. It is found in the nucleoid. The chain is Transcriptional regulator MraZ from Thermoanaerobacter sp. (strain X514).